Here is a 230-residue protein sequence, read N- to C-terminus: Agamous-like MADS-box protein AGL11 (230 aa).

The MADS-box domain maps to 3-57; the sequence is RGKIEIKRIENSTNRQVTFCKRRNGLLKKAYELSVLCDAEVALIVFSTRGRLYEY. The region spanning 87 to 177 is the K-box domain; that stretch reads AAYYQQESAK…RTKVAEVERY (91 aa). Residues 211-230 are disordered; sequence SGSGNGGSYSDPDKKILHLG. Residues 221 to 230 are compositionally biased toward basic and acidic residues; that stretch reads DPDKKILHLG.

As to quaternary structure, interacts with AGL15 and AGL16.

The protein resides in the nucleus. Functionally, probable transcription factor. Is required, together with TT16/AGL32 for the maternal control of endothelium formation, which is essential for female gametophyte development and fertilization, and seed formation. The chain is Agamous-like MADS-box protein AGL11 (AGL11) from Arabidopsis thaliana (Mouse-ear cress).